Here is a 955-residue protein sequence, read N- to C-terminus: 26S proteasome non-ATPase regulatory subunit 1 (955 aa).

Residues 279 to 313 (PGSTNTGTVPGSEKDSDAMEAEEKPGSTCVGKSAE) are disordered. The span at 290–303 (SEKDSDAMEAEEKP) shows a compositional bias: basic and acidic residues. 10 PC repeats span residues 403–436 (TATASLGVIHKGHEKEALQLMATYLPKDTSPGSA), 441–474 (GGLYALGLIHANHGGDIIDYLLNQLKNASNDIVR), 476–510 (GGSLGLGLAAMGTARQDVYDLLKTNLYQDDAVTGE), 511–545 (AAGLALGLVMLGSKNAQAIEDMVGYAQETQHEKIL), 547–580 (GLAVGIALVMYGRMEEADALIESLCRDKDPILRR), 581–616 (SGMYTVAMAYCGSGNNKAIRRLLHVAVSDVNDDVRR), 617–649 (AAVESLGFILFRTPEQCPSVVSLLSESYNPHVR), 651–685 (GAAMALGICCAGTGNKEAINLLEPMTNDPVNYVRQ), 686–726 (GALI…DVMA), and 729–761 (GAILAQGILDAGGHNVIISLQSRTGHTHMPSVV). Disordered regions lie at residues 839-879 (AKKK…NFQL) and 932-955 (AHGPKIEEEEQEPEPPEPFEYIDD). Basic and acidic residues-rich tracts occupy residues 842-854 (KEKEKEKEKKEEE) and 861-874 (TEKKDEKEKKKEPE). Positions 938-955 (EEEEQEPEPPEPFEYIDD) are enriched in acidic residues.

It belongs to the proteasome subunit S1 family. In terms of assembly, component of the 19S proteasome regulatory particle complex. The 26S proteasome consists of a 20S core particle (CP) and two 19S regulatory subunits (RP). The regulatory particle is made of a lid composed of 9 subunits, a base containing 6 ATPases and few additional components including PSMD1. Interacts with ADRM1.

Functionally, component of the 26S proteasome, a multiprotein complex involved in the ATP-dependent degradation of ubiquitinated proteins. This complex plays a key role in the maintenance of protein homeostasis by removing misfolded or damaged proteins, which could impair cellular functions, and by removing proteins whose functions are no longer required. Therefore, the proteasome participates in numerous cellular processes, including cell cycle progression, apoptosis, or DNA damage repair. This is 26S proteasome non-ATPase regulatory subunit 1 (PSMD1) from Gallus gallus (Chicken).